The primary structure comprises 558 residues: Dihydroxy-acid dehydratase (558 aa).

Position 78 (Asp78) interacts with Mg(2+). Cys119 is a binding site for [2Fe-2S] cluster. 2 residues coordinate Mg(2+): Asp120 and Lys121. The residue at position 121 (Lys121) is an N6-carboxylysine. Cys192 lines the [2Fe-2S] cluster pocket. Glu445 lines the Mg(2+) pocket. Catalysis depends on Ser471, which acts as the Proton acceptor.

This sequence belongs to the IlvD/Edd family. Homodimer. [2Fe-2S] cluster is required as a cofactor. The cofactor is Mg(2+).

The catalysed reaction is (2R)-2,3-dihydroxy-3-methylbutanoate = 3-methyl-2-oxobutanoate + H2O. The enzyme catalyses (2R,3R)-2,3-dihydroxy-3-methylpentanoate = (S)-3-methyl-2-oxopentanoate + H2O. The protein operates within amino-acid biosynthesis; L-isoleucine biosynthesis; L-isoleucine from 2-oxobutanoate: step 3/4. It functions in the pathway amino-acid biosynthesis; L-valine biosynthesis; L-valine from pyruvate: step 3/4. Its function is as follows. Functions in the biosynthesis of branched-chain amino acids. Catalyzes the dehydration of (2R,3R)-2,3-dihydroxy-3-methylpentanoate (2,3-dihydroxy-3-methylvalerate) into 2-oxo-3-methylpentanoate (2-oxo-3-methylvalerate) and of (2R)-2,3-dihydroxy-3-methylbutanoate (2,3-dihydroxyisovalerate) into 2-oxo-3-methylbutanoate (2-oxoisovalerate), the penultimate precursor to L-isoleucine and L-valine, respectively. In Akkermansia muciniphila (strain ATCC BAA-835 / DSM 22959 / JCM 33894 / BCRC 81048 / CCUG 64013 / CIP 107961 / Muc), this protein is Dihydroxy-acid dehydratase.